We begin with the raw amino-acid sequence, 643 residues long: Threonine--tRNA ligase (643 aa).

The region spanning 1 to 61 (MIKITLKDGS…NEDSSLEICT (61 aa)) is the TGS domain. The segment at 240–540 (DHNKLGRELG…LIEKYAGALP (301 aa)) is catalytic. Residues Cys335, His386, and His517 each contribute to the Zn(2+) site.

It belongs to the class-II aminoacyl-tRNA synthetase family. Homodimer. Requires Zn(2+) as cofactor.

The protein localises to the cytoplasm. The catalysed reaction is tRNA(Thr) + L-threonine + ATP = L-threonyl-tRNA(Thr) + AMP + diphosphate + H(+). Catalyzes the attachment of threonine to tRNA(Thr) in a two-step reaction: L-threonine is first activated by ATP to form Thr-AMP and then transferred to the acceptor end of tRNA(Thr). Also edits incorrectly charged L-seryl-tRNA(Thr). The chain is Threonine--tRNA ligase from Clostridium perfringens (strain SM101 / Type A).